We begin with the raw amino-acid sequence, 534 residues long: Cytokinin dehydrogenase 5 (534 aa).

The first 20 residues, 1–20 (MAWCLVFMVFLIYCLISTVG), serve as a signal peptide directing secretion. The FAD-binding PCMH-type domain maps to 59–243 (TSAEPLAVFH…TRARIALEPA (185 aa)). The FAD site is built by A93, G95, and G97. H98 carries the pros-8alpha-FAD histidine modification. Residues S99 and Q103 each coordinate FAD. N-linked (GlcNAc...) asparagine glycosylation is present at N152. FAD is bound by residues D167, S172, S178, I182, and I233. A glycan (N-linked (GlcNAc...) asparagine) is linked at N256. FAD-binding residues include Y484 and Q522.

This sequence belongs to the oxygen-dependent FAD-linked oxidoreductase family. Monomer. It depends on FAD as a cofactor. In terms of tissue distribution, expressed in inflorescence meristems.

It localises to the secreted. Its subcellular location is the extracellular space. The catalysed reaction is N(6)-dimethylallyladenine + A + H2O = 3-methyl-2-butenal + adenine + AH2. Catalyzes the oxidation of cytokinins, a family of N(6)-substituted adenine derivatives that are plant hormones, where the substituent is an isopentenyl group. The chain is Cytokinin dehydrogenase 5 (CKX5) from Oryza sativa subsp. japonica (Rice).